We begin with the raw amino-acid sequence, 176 residues long: Nucleoside triphosphate/diphosphate phosphatase (176 aa).

Arg23 serves as the catalytic Proton donor. Mg(2+) is bound by residues Asn87, Asp103, Asp105, Asp107, Asp120, and Glu123.

It belongs to the Ntdp family. Mg(2+) is required as a cofactor.

It carries out the reaction a ribonucleoside 5'-triphosphate + H2O = a ribonucleoside 5'-diphosphate + phosphate + H(+). The enzyme catalyses a ribonucleoside 5'-diphosphate + H2O = a ribonucleoside 5'-phosphate + phosphate + H(+). Has nucleoside phosphatase activity towards nucleoside triphosphates and nucleoside diphosphates. The protein is Nucleoside triphosphate/diphosphate phosphatase of Bacillus licheniformis (strain ATCC 14580 / DSM 13 / JCM 2505 / CCUG 7422 / NBRC 12200 / NCIMB 9375 / NCTC 10341 / NRRL NRS-1264 / Gibson 46).